The chain runs to 203 residues: Casparian strip membrane protein 1 (203 aa).

A2 is subject to N-acetylalanine. Residues 2 to 40 (AKESTTIDVGEPSTVTKSSSHVVKKKGFVAAAAGGGAKR) are Cytoplasmic-facing. A helical transmembrane segment spans residues 41 to 61 (GLAIFDFLLRLAAIGVTIGAA). Residues 62–92 (SVMYTAQETLPFFTQFLQFQAGYDDLPAFQY) are Extracellular-facing. Residues 93–113 (FVIAVAIVASYLVLSLPFSIV) traverse the membrane as a helical segment. The Cytoplasmic portion of the chain corresponds to 114–124 (TIVRPLAVAPR). A helical membrane pass occupies residues 125 to 145 (LILLIFDTLVVTLNTSAAAAA). Topologically, residues 146-177 (ASIVYLAHNGNQSTNWLPICQQFGDFCQNVST) are extracellular. Residues N156 and N174 are each glycosylated (N-linked (GlcNAc...) asparagine). A helical membrane pass occupies residues 178-198 (AVVAASIAILFFIVLIIISAI). The Cytoplasmic segment spans residues 199–203 (ALKRH).

It belongs to the Casparian strip membrane proteins (CASP) family. As to quaternary structure, homodimer and heterodimers.

It is found in the cell membrane. Functionally, regulates membrane-cell wall junctions and localized cell wall deposition. Required for establishment of the Casparian strip membrane domain (CSD) and the subsequent formation of Casparian strips, a cell wall modification of the root endodermis that determines an apoplastic barrier between the intraorganismal apoplasm and the extraorganismal apoplasm and prevents lateral diffusion. The sequence is that of Casparian strip membrane protein 1 from Arabidopsis lyrata subsp. lyrata (Lyre-leaved rock-cress).